The following is a 132-amino-acid chain: RuBisCO chaperone RbcX (132 aa).

The disordered stretch occupies residues histidine 110–histidine 132. Positions leucine 111–histidine 132 are enriched in polar residues.

It belongs to the RbcX family. As to quaternary structure, homodimer. Interacts with the exposed C-terminal peptide of RbcL via its central cleft, contacts a second RbcL monomer via its peripheral polar surface. RbcX and Raf1 can bind simultaneously to RbcL.

Its subcellular location is the carboxysome. It is found in the cytoplasm. An RbcL-specific chaperone. The central cleft of the RbcX homodimer (RbcX2) binds the C-terminus of an RbcL monomer, stabilizing the C-terminus and probably preventing its reassociation with chaperonin GroEL-ES. At the same time the peripheral region of RbcX2 binds a second RbcL monomer, bridging the RbcL homodimers in the correct orientation. The RbcX2(2)-bound RbcL dimers then assemble into the RbcL8 core (RbcL8-(RbcX2)8). RbcS binding triggers the release of RbcX2. Its function is as follows. When rbcL-rbcX-rbcS or rbcL-rbcS were overexpressed in E.coli no change in reconstituted RuBisCO activity was observed, which suggests RbcX plays no role in RuBisCO assembly in this system. However in PubMed:8472962 E.coli chaperones groL and groS were also overexpressed, which may compensate for lack of rbcX. This chain is RuBisCO chaperone RbcX, found in Nostoc sp. (strain PCC 7120 / SAG 25.82 / UTEX 2576).